We begin with the raw amino-acid sequence, 253 residues long: Phosphate import ATP-binding protein PstB (253 aa).

In terms of domain architecture, ABC transporter spans I5 to V248. Residue G37 to S44 participates in ATP binding.

This sequence belongs to the ABC transporter superfamily. Phosphate importer (TC 3.A.1.7) family. The complex is composed of two ATP-binding proteins (PstB), two transmembrane proteins (PstC and PstA) and a solute-binding protein (PstS).

It localises to the cell membrane. The enzyme catalyses phosphate(out) + ATP + H2O = ADP + 2 phosphate(in) + H(+). In terms of biological role, part of the ABC transporter complex PstSACB involved in phosphate import. Responsible for energy coupling to the transport system. This chain is Phosphate import ATP-binding protein PstB, found in Thermococcus kodakarensis (strain ATCC BAA-918 / JCM 12380 / KOD1) (Pyrococcus kodakaraensis (strain KOD1)).